A 100-amino-acid chain; its full sequence is Urease subunit gamma (100 aa).

Belongs to the urease gamma subunit family. As to quaternary structure, heterotrimer of UreA (gamma), UreB (beta) and UreC (alpha) subunits. Three heterotrimers associate to form the active enzyme.

It localises to the cytoplasm. The enzyme catalyses urea + 2 H2O + H(+) = hydrogencarbonate + 2 NH4(+). The protein operates within nitrogen metabolism; urea degradation; CO(2) and NH(3) from urea (urease route): step 1/1. This chain is Urease subunit gamma, found in Mesorhizobium japonicum (strain LMG 29417 / CECT 9101 / MAFF 303099) (Mesorhizobium loti (strain MAFF 303099)).